We begin with the raw amino-acid sequence, 85 residues long: Cell division protein ZapA (85 aa).

Residues 60–85 (AVNVVHDYLKLKEELERLKGQIKEKD) are a coiled coil.

It belongs to the ZapA family. Type 2 subfamily. Homodimer. Interacts with FtsZ.

The protein resides in the cytoplasm. Activator of cell division through the inhibition of FtsZ GTPase activity, therefore promoting FtsZ assembly into bundles of protofilaments necessary for the formation of the division Z ring. It is recruited early at mid-cell but it is not essential for cell division. The polypeptide is Cell division protein ZapA (Bacillus licheniformis (strain ATCC 14580 / DSM 13 / JCM 2505 / CCUG 7422 / NBRC 12200 / NCIMB 9375 / NCTC 10341 / NRRL NRS-1264 / Gibson 46)).